Here is a 550-residue protein sequence, read N- to C-terminus: Arginine--tRNA ligase (550 aa).

The 'HIGH' region signature appears at 130–140 (ANPTGPIHLGG).

This sequence belongs to the class-I aminoacyl-tRNA synthetase family. In terms of assembly, monomer.

It localises to the cytoplasm. It catalyses the reaction tRNA(Arg) + L-arginine + ATP = L-arginyl-tRNA(Arg) + AMP + diphosphate. The sequence is that of Arginine--tRNA ligase from Rhodococcus jostii (strain RHA1).